Reading from the N-terminus, the 298-residue chain is Ethanolamine ammonia-lyase small subunit (298 aa).

Adenosylcob(III)alamin is bound by residues V210, E231, and C261.

Belongs to the EutC family. In terms of assembly, the basic unit is a heterodimer which dimerizes to form tetramers. The heterotetramers trimerize; 6 large subunits form a core ring with 6 small subunits projecting outwards. It depends on adenosylcob(III)alamin as a cofactor.

The protein resides in the bacterial microcompartment. It catalyses the reaction ethanolamine = acetaldehyde + NH4(+). The protein operates within amine and polyamine degradation; ethanolamine degradation. Its function is as follows. Catalyzes the deamination of various vicinal amino-alcohols to oxo compounds. Allows this organism to utilize ethanolamine as the sole source of nitrogen and carbon in the presence of external vitamin B12. This chain is Ethanolamine ammonia-lyase small subunit, found in Salmonella dublin (strain CT_02021853).